The sequence spans 1598 residues: Serine/threonine-protein kinase Nek1 (1598 aa).

In terms of domain architecture, Protein kinase spans Tyr-106 to Phe-380. Residues Ile-112–Val-120 and Lys-135 each bind ATP. The active-site Proton acceptor is Asp-240.

It belongs to the protein kinase superfamily. NEK Ser/Thr protein kinase family. NIMA subfamily.

The protein localises to the cytoplasm. The protein resides in the cytoskeleton. Its subcellular location is the microtubule organizing center. It is found in the centrosome. It localises to the spindle pole. It carries out the reaction L-seryl-[protein] + ATP = O-phospho-L-seryl-[protein] + ADP + H(+). It catalyses the reaction L-threonyl-[protein] + ATP = O-phospho-L-threonyl-[protein] + ADP + H(+). Its activity is regulated as follows. Phosphorylation status of the T-loop (amino acids 267-293) modulates kinase activity and subcellular localization of the protein. Probable serine/threonine-protein kinase. Involved in controlling centrosome splitting. Promotes separation of the centrosome outer cores. The sequence is that of Serine/threonine-protein kinase Nek1 from Toxoplasma gondii (strain ATCC 50611 / Me49).